The sequence spans 138 residues: Acidic phospholipase A2 Ts-A6 (138 aa).

Positions 1-16 (MRALWIMAVLLLGVEG) are cleaved as a signal peptide. 7 cysteine pairs are disulfide-bonded: cysteine 42–cysteine 131, cysteine 44–cysteine 60, cysteine 59–cysteine 111, cysteine 65–cysteine 138, cysteine 66–cysteine 104, cysteine 73–cysteine 97, and cysteine 91–cysteine 102. Ca(2+) contacts are provided by tyrosine 43, glycine 45, and glycine 47. Histidine 63 is an active-site residue. Aspartate 64 lines the Ca(2+) pocket. The active site involves aspartate 105.

Ca(2+) serves as cofactor. As to expression, expressed by the venom gland.

The protein localises to the secreted. It catalyses the reaction a 1,2-diacyl-sn-glycero-3-phosphocholine + H2O = a 1-acyl-sn-glycero-3-phosphocholine + a fatty acid + H(+). Snake venom phospholipase A2 (PLA2) that shows a moderate inhibition of ADP-induced human platelet aggregation when tested on platelet rich plasma. Exhibits high hydrolytic activities and prefers the anionic micelles (dPPC with deoxycholate) to the zwitterionic micelles (dPPC with Triton X-100). PLA2 catalyzes the calcium-dependent hydrolysis of the 2-acyl groups in 3-sn-phosphoglycerides. In Trimeresurus stejnegeri (Chinese green tree viper), this protein is Acidic phospholipase A2 Ts-A6.